We begin with the raw amino-acid sequence, 302 residues long: ATP synthase subunit a (302 aa).

Transmembrane regions (helical) follow at residues 61–81 (VDSL…FWLG), 119–139 (IAPL…MDLI), 148–168 (FEWV…FKIV), 172–192 (DPNI…FLTI), 214–234 (PVVK…ALLA), 252–272 (FVFI…AWPW), and 273–293 (AVFH…LTIV).

The protein belongs to the ATPase A chain family. In terms of assembly, F-type ATPases have 2 components, CF(1) - the catalytic core - and CF(0) - the membrane proton channel. CF(1) has five subunits: alpha(3), beta(3), gamma(1), delta(1), epsilon(1). CF(0) has three main subunits: a(1), b(2) and c(9-12). The alpha and beta chains form an alternating ring which encloses part of the gamma chain. CF(1) is attached to CF(0) by a central stalk formed by the gamma and epsilon chains, while a peripheral stalk is formed by the delta and b chains.

The protein resides in the cell inner membrane. In terms of biological role, key component of the proton channel; it plays a direct role in the translocation of protons across the membrane. This chain is ATP synthase subunit a, found in Alcanivorax borkumensis (strain ATCC 700651 / DSM 11573 / NCIMB 13689 / SK2).